A 159-amino-acid polypeptide reads, in one-letter code: Small ribosomal subunit protein uS9 (159 aa).

The protein belongs to the universal ribosomal protein uS9 family.

The chain is Small ribosomal subunit protein uS9 from Bradyrhizobium diazoefficiens (strain JCM 10833 / BCRC 13528 / IAM 13628 / NBRC 14792 / USDA 110).